A 247-amino-acid chain; its full sequence is MKMANPKYKRILIKLSGEALAGERGVGIDIQTVQTIAKEIQEVHSLGIEIALVIGGGNLWRGEPAAEAGMDRVQADYTGMLGTVMNALVMADSLQQVGVDTRVQTAIAMQQVAEPYVRGRALRHLEKGRIVIFGAGIGSPYFSTDTTAALRAAEIEADAILMAKNGVDGVYNADPKKDKTAVKFEELTHRDVINKGLRIMDSTASTLSMDNDIDLVVFNMNQSGNIKRVVFGENIGTTVSNNIEEKE.

14-17 (KLSG) is an ATP binding site. The involved in allosteric activation by GTP stretch occupies residues 22–27 (GERGVG). Position 56 (G56) interacts with UMP. Positions 57 and 61 each coordinate ATP. Residues D76 and 137 to 144 (IGSPYFST) each bind UMP. Residues N165, Y171, and D174 each contribute to the ATP site.

It belongs to the UMP kinase family. As to quaternary structure, homohexamer.

The protein resides in the cytoplasm. The enzyme catalyses UMP + ATP = UDP + ADP. It participates in pyrimidine metabolism; CTP biosynthesis via de novo pathway; UDP from UMP (UMPK route): step 1/1. Allosterically activated by GTP. Inhibited by UTP. Its function is as follows. Catalyzes the reversible phosphorylation of UMP to UDP. This chain is Uridylate kinase, found in Streptococcus pneumoniae (strain ATCC BAA-255 / R6).